The chain runs to 451 residues: Subtilase-type proteinase psp3 (451 aa).

The first 20 residues, 1–20, serve as a signal peptide directing secretion; it reads MRVSWISGLLLVAHLAPSSA. An Inhibitor I9 domain is found at 80 to 161; sequence YIVMFKPSVD…LVEPDRVMHV (82 aa). Residues 169–451 enclose the Peptidase S8 domain; that stretch reads PWGLARVSHR…PNVLAFNNYE (283 aa). Active-site charge relay system residues include Asp-205, His-237, and Ser-394.

Belongs to the peptidase S8 family.

The chain is Subtilase-type proteinase psp3 (psp3) from Schizosaccharomyces pombe (strain 972 / ATCC 24843) (Fission yeast).